Here is a 155-residue protein sequence, read N- to C-terminus: Ribosome maturation factor RimP (155 aa).

The protein belongs to the RimP family.

It is found in the cytoplasm. Its function is as follows. Required for maturation of 30S ribosomal subunits. This is Ribosome maturation factor RimP from Prochlorococcus marinus (strain SARG / CCMP1375 / SS120).